The primary structure comprises 249 residues: MPFEIVFEGAKEFAQLIETASRLIDEAAFKVTEEGISMRAMDPSRVVLIDLNLPASIFSKYEVDGEETIGVNMDHLKKVLKRGKAKETLILRKGEENFLEISLQGTATRTFKLPLIDVEEIEVDLPELPFTAKVVILGDVIKEAVKDASLVSDSMKFIAKENEFTMRAEGETQEVEVKLTLEDEGLLDIEVQEETKSAYGISYLSDMVKGLGKADEVTIKFGNEMPMQMEYYIRDEGRLIFLLAPRVEE.

Belongs to the PCNA family. As to quaternary structure, the subunits circularize to form a toroid; DNA passes through its center. Replication factor C (RFC) is required to load the toroid on the DNA. Homotrimer. Interacts with NucS.

In terms of biological role, sliding clamp subunit that acts as a moving platform for DNA processing. Responsible for tethering the catalytic subunit of DNA polymerase and other proteins to DNA during high-speed replication. Regulates activity of NucS endonuclease and prevents non-specific cleavage. The chain is DNA polymerase sliding clamp from Pyrococcus abyssi (strain GE5 / Orsay).